Here is a 202-residue protein sequence, read N- to C-terminus: tRNA (guanine-N(7)-)-methyltransferase (202 aa).

4 residues coordinate S-adenosyl-L-methionine: glutamate 34, glutamate 59, aspartate 86, and aspartate 107. The active site involves aspartate 107. Substrate contacts are provided by residues lysine 111, aspartate 143, and 181–184; that span reads TDYE.

The protein belongs to the class I-like SAM-binding methyltransferase superfamily. TrmB family.

The enzyme catalyses guanosine(46) in tRNA + S-adenosyl-L-methionine = N(7)-methylguanosine(46) in tRNA + S-adenosyl-L-homocysteine. Its pathway is tRNA modification; N(7)-methylguanine-tRNA biosynthesis. Its function is as follows. Catalyzes the formation of N(7)-methylguanine at position 46 (m7G46) in tRNA. In Metamycoplasma hominis (strain ATCC 23114 / DSM 25592 / NBRC 14850 / NCTC 10111 / PG21) (Mycoplasma hominis), this protein is tRNA (guanine-N(7)-)-methyltransferase.